The chain runs to 515 residues: Bifunctional purine biosynthesis protein PurH (515 aa).

Residues 1–145 (MTKRVLISVS…KNHASVTVVV (145 aa)) enclose the MGS-like domain.

Belongs to the PurH family.

The catalysed reaction is (6R)-10-formyltetrahydrofolate + 5-amino-1-(5-phospho-beta-D-ribosyl)imidazole-4-carboxamide = 5-formamido-1-(5-phospho-D-ribosyl)imidazole-4-carboxamide + (6S)-5,6,7,8-tetrahydrofolate. It carries out the reaction IMP + H2O = 5-formamido-1-(5-phospho-D-ribosyl)imidazole-4-carboxamide. It functions in the pathway purine metabolism; IMP biosynthesis via de novo pathway; 5-formamido-1-(5-phospho-D-ribosyl)imidazole-4-carboxamide from 5-amino-1-(5-phospho-D-ribosyl)imidazole-4-carboxamide (10-formyl THF route): step 1/1. Its pathway is purine metabolism; IMP biosynthesis via de novo pathway; IMP from 5-formamido-1-(5-phospho-D-ribosyl)imidazole-4-carboxamide: step 1/1. The protein is Bifunctional purine biosynthesis protein PurH of Streptococcus pneumoniae (strain 70585).